The following is a 920-amino-acid chain: DNA ligase (920 aa).

Residues Asp90–Asp94, Ser139–Leu140, and Glu173 contribute to the NAD(+) site. Residue Lys175 is the N6-AMP-lysine intermediate of the active site. Residues Arg196, Glu235, Lys360, and Lys384 each contribute to the NAD(+) site. Zn(2+) contacts are provided by Cys481, Cys484, Cys500, and Cys506. A disordered region spans residues Gly662–Gly691. A compositionally biased stretch (polar residues) spans Ala669–Ala682. The region spanning Ser839–Ile920 is the BRCT domain.

This sequence belongs to the NAD-dependent DNA ligase family. LigA subfamily. Requires Mg(2+) as cofactor. It depends on Mn(2+) as a cofactor.

The catalysed reaction is NAD(+) + (deoxyribonucleotide)n-3'-hydroxyl + 5'-phospho-(deoxyribonucleotide)m = (deoxyribonucleotide)n+m + AMP + beta-nicotinamide D-nucleotide.. Its function is as follows. DNA ligase that catalyzes the formation of phosphodiester linkages between 5'-phosphoryl and 3'-hydroxyl groups in double-stranded DNA using NAD as a coenzyme and as the energy source for the reaction. It is essential for DNA replication and repair of damaged DNA. The sequence is that of DNA ligase from Bifidobacterium longum (strain DJO10A).